Here is a 296-residue protein sequence, read N- to C-terminus: Arginine/serine-rich protein 1 (296 aa).

Positions 1 to 131 are disordered; it reads MSNYVNDMWP…RSRSRSRERS (131 aa). Phosphoserine is present on Ser-12. Over residues 20–31 the composition is skewed to low complexity; the sequence is SASRSGGSSRLS. Residues 32-125 are compositionally biased toward basic residues; it reads SRSRSRSFSR…RSRSRSRSRS (94 aa). Ser-111 and Ser-113 each carry phosphoserine. An Omega-N-methylarginine modification is found at Arg-141. Positions 156 to 165 are enriched in basic and acidic residues; sequence ERSRWRDRSR. 2 disordered regions span residues 156-175 and 217-296; these read ERSRWRDRSRTRSRSRTPFR and SHGI…WIPV. The span at 245 to 261 shows a compositional bias: polar residues; the sequence is EKPSQQRSIAFSSNNSV. The span at 272–287 shows a compositional bias: basic and acidic residues; the sequence is ATEETSSRSPKIDKKK. Ser-280 bears the Phosphoserine mark.

This sequence belongs to the RSRP family. Post-translationally, phosphorylated. Phosphorylation at Ser-111 and Ser-113 mediates the interaction with spliceosome proteins.

Its subcellular location is the nucleus. Its function is as follows. Probably acts as a spliceosomal factor that contributes to spliceosome assembly and regulates the isoform switching of proteins such as PARP6. In Macaca fascicularis (Crab-eating macaque), this protein is Arginine/serine-rich protein 1 (RSRP1).